The primary structure comprises 181 residues: Protoporphyrinogen IX dehydrogenase [quinone] (181 aa).

Residues Thr-3–Ala-172 enclose the Flavodoxin-like domain. FMN-binding positions include Thr-9–Gln-13 and Phe-84–Thr-152.

Belongs to the HemG family. The cofactor is FMN.

The protein localises to the cell inner membrane. It carries out the reaction protoporphyrinogen IX + 3 a menaquinone = protoporphyrin IX + 3 a menaquinol. The catalysed reaction is protoporphyrinogen IX + 3 a ubiquinone = protoporphyrin IX + 3 a ubiquinol. The enzyme catalyses protoporphyrinogen IX + 3 a quinone = protoporphyrin IX + 3 a quinol. The protein operates within porphyrin-containing compound metabolism; protoporphyrin-IX biosynthesis; protoporphyrin-IX from protoporphyrinogen-IX: step 1/1. In terms of biological role, catalyzes the 6-electron oxidation of protoporphyrinogen IX to form protoporphyrin IX; under anaerobic conditions uses menaquinone as an electron acceptor, under aerobic condition uses ubiquinone as an electron acceptor. The polypeptide is Protoporphyrinogen IX dehydrogenase [quinone] (Escherichia coli O157:H7).